A 357-amino-acid chain; its full sequence is Peptide chain release factor 1 (357 aa).

Residue Gln-233 is modified to N5-methylglutamine.

This sequence belongs to the prokaryotic/mitochondrial release factor family. Methylated by PrmC. Methylation increases the termination efficiency of RF1.

It localises to the cytoplasm. In terms of biological role, peptide chain release factor 1 directs the termination of translation in response to the peptide chain termination codons UAG and UAA. The sequence is that of Peptide chain release factor 1 from Enterococcus faecalis (strain ATCC 700802 / V583).